Reading from the N-terminus, the 967-residue chain is Leucine--tRNA ligase (967 aa).

Positions 43-53 (PYLSGHLHVGH) match the 'HIGH' region motif. The 'KMSKS' region signature appears at 650–654 (KMSKS). ATP is bound at residue K653.

Belongs to the class-I aminoacyl-tRNA synthetase family.

The protein localises to the cytoplasm. The catalysed reaction is tRNA(Leu) + L-leucine + ATP = L-leucyl-tRNA(Leu) + AMP + diphosphate. The protein is Leucine--tRNA ligase of Thermococcus kodakarensis (strain ATCC BAA-918 / JCM 12380 / KOD1) (Pyrococcus kodakaraensis (strain KOD1)).